Here is a 71-residue protein sequence, read N- to C-terminus: Protein SlyX homolog (71 aa).

The protein belongs to the SlyX family.

The sequence is that of Protein SlyX homolog from Rhodopseudomonas palustris (strain BisB5).